The primary structure comprises 447 residues: N-succinylarginine dihydrolase (447 aa).

Substrate-binding positions include 19-28 (AGLSFGNEAS), asparagine 110, and 137-138 (HR). Glutamate 174 is a catalytic residue. Arginine 212 contributes to the substrate binding site. Histidine 248 is a catalytic residue. 2 residues coordinate substrate: aspartate 250 and asparagine 359. Cysteine 365 functions as the Nucleophile in the catalytic mechanism.

This sequence belongs to the succinylarginine dihydrolase family. In terms of assembly, homodimer.

It carries out the reaction N(2)-succinyl-L-arginine + 2 H2O + 2 H(+) = N(2)-succinyl-L-ornithine + 2 NH4(+) + CO2. It participates in amino-acid degradation; L-arginine degradation via AST pathway; L-glutamate and succinate from L-arginine: step 2/5. In terms of biological role, catalyzes the hydrolysis of N(2)-succinylarginine into N(2)-succinylornithine, ammonia and CO(2). This is N-succinylarginine dihydrolase from Escherichia coli O7:K1 (strain IAI39 / ExPEC).